The sequence spans 571 residues: uncharacterized protein (571 aa).

Transmembrane regions (helical) follow at residues 10–29, 36–55, 65–87, 96–118, and 166–188; these read VRLH…HFIG, VSLG…GLLF, WAFF…FASL, ALAV…LFRF, and ATTY…PRLL. Residues 294-378 form the RCK C-terminal domain; it reads TEVDDQELLS…IATAARNLGF (85 aa). The next 6 helical transmembrane spans lie at 388–406, 411–433, 446–465, 480–502, 509–531, and 546–568; these read LVYL…LLQV, VPLG…WLYS, LRLL…GLAA, LFAK…GLLL, LPPI…LNAL, and VPFA…CAVA.

This sequence belongs to the AAE transporter (TC 2.A.81) family.

It is found in the cell membrane. This is an uncharacterized protein from Bordetella bronchiseptica (strain ATCC BAA-588 / NCTC 13252 / RB50) (Alcaligenes bronchisepticus).